The primary structure comprises 149 residues: Limonene-1,2-epoxide hydrolase (149 aa).

D101 serves as the catalytic Proton donor. D132 functions as the Proton acceptor in the catalytic mechanism.

This sequence belongs to the limonene-1,2-epoxide hydrolase family. As to quaternary structure, monomer.

It carries out the reaction limonene 1,2-epoxide + H2O = limonene-1,2-diol. Its pathway is terpene metabolism; (4R)-limonene degradation; (1S,4R)-1-hydroxylimonen-2-one from (4R)-limonene: step 2/3. Catalyzes the conversion of limonene-1,2-epoxide to limonene-1,2-diol. Can use both the (-) and (+) isomers of limonene-1,2-epoxide as substrates and also has some activity with 1-methylcyclohexene oxide, cyclohexene oxide and indene oxide as substrates. The chain is Limonene-1,2-epoxide hydrolase (limA) from Rhodococcus erythropolis (Arthrobacter picolinophilus).